We begin with the raw amino-acid sequence, 324 residues long: Protoheme IX farnesyltransferase 2 (324 aa).

Transmembrane regions (helical) follow at residues 39 to 59 (LIKP…MLLA), 63 to 83 (IPSP…AGSA), 115 to 135 (HALV…WATT), 137 to 157 (LLSA…YTLV), 166 to 186 (IVWG…GVTG), 192 to 212 (ALVM…SLAM), 239 to 259 (IVVF…ATGW), 260 to 280 (LYTA…HRLH), and 302 to 322 (LMIV…VLGW).

This sequence belongs to the UbiA prenyltransferase family. Protoheme IX farnesyltransferase subfamily.

The protein resides in the cell membrane. The catalysed reaction is heme b + (2E,6E)-farnesyl diphosphate + H2O = Fe(II)-heme o + diphosphate. Its pathway is porphyrin-containing compound metabolism; heme O biosynthesis; heme O from protoheme: step 1/1. Its function is as follows. Converts heme B (protoheme IX) to heme O by substitution of the vinyl group on carbon 2 of heme B porphyrin ring with a hydroxyethyl farnesyl side group. The polypeptide is Protoheme IX farnesyltransferase 2 (Saccharopolyspora erythraea (strain ATCC 11635 / DSM 40517 / JCM 4748 / NBRC 13426 / NCIMB 8594 / NRRL 2338)).